Consider the following 420-residue polypeptide: Mitochondrial chaperone BCS1 (420 aa).

Residues 1-15 (MTLSDFIGALKDNPY) are Mitochondrial intermembrane-facing. Residues 16–32 (FGAGFGLVGVGTALAVA) traverse the membrane as a helical segment. Topologically, residues 33 to 420 (RKGAQVGMIF…AIKNIAEIKD (388 aa)) are mitochondrial matrix. ATP is bound at residue 230 to 237 (GPPGCGKS).

The protein belongs to the AAA ATPase family. BCS1 subfamily.

The protein resides in the mitochondrion inner membrane. It carries out the reaction ATP + H2O = ADP + phosphate + H(+). Its function is as follows. Chaperone necessary for the incorporation of Rieske iron-sulfur protein uqcrfs1 into the mitochondrial respiratory chain complex III. The sequence is that of Mitochondrial chaperone BCS1 (bcs1l) from Danio rerio (Zebrafish).